We begin with the raw amino-acid sequence, 294 residues long: Homeobox protein HD1 (294 aa).

An ELK domain is found at 197–217 (ELKLELKQGFKSRIEDVREEI). Residues 218–281 (MRKRRAGKLP…NQRKRNWHNN (64 aa)) constitute a DNA-binding region (homeobox; TALE-type).

This sequence belongs to the TALE/KNOX homeobox family. In roots, stems and cotyledons of one-week old seedlings. In mature plants, in young leaves from first level below flowers as well as in flower buds and open flowers.

Its subcellular location is the nucleus. Possible developmental regulator. The chain is Homeobox protein HD1 (HD1) from Brassica napus (Rape).